The chain runs to 951 residues: Glycine dehydrogenase (decarboxylating) (951 aa).

Lysine 709 bears the N6-(pyridoxal phosphate)lysine mark.

Belongs to the GcvP family. In terms of assembly, the glycine cleavage system is composed of four proteins: P, T, L and H. Pyridoxal 5'-phosphate is required as a cofactor.

The enzyme catalyses N(6)-[(R)-lipoyl]-L-lysyl-[glycine-cleavage complex H protein] + glycine + H(+) = N(6)-[(R)-S(8)-aminomethyldihydrolipoyl]-L-lysyl-[glycine-cleavage complex H protein] + CO2. In terms of biological role, the glycine cleavage system catalyzes the degradation of glycine. The P protein binds the alpha-amino group of glycine through its pyridoxal phosphate cofactor; CO(2) is released and the remaining methylamine moiety is then transferred to the lipoamide cofactor of the H protein. The polypeptide is Glycine dehydrogenase (decarboxylating) (Gluconobacter oxydans (strain 621H) (Gluconobacter suboxydans)).